A 108-amino-acid chain; its full sequence is L-rhamnose mutarotase (108 aa).

Tyr18 contacts substrate. His22 functions as the Proton donor in the catalytic mechanism. Residues Tyr41 and 76-77 (WW) each bind substrate.

Belongs to the rhamnose mutarotase family. Homodimer.

It is found in the cytoplasm. It catalyses the reaction alpha-L-rhamnose = beta-L-rhamnose. The protein operates within carbohydrate metabolism; L-rhamnose metabolism. Its function is as follows. Involved in the anomeric conversion of L-rhamnose. This chain is L-rhamnose mutarotase, found in Paraburkholderia phymatum (strain DSM 17167 / CIP 108236 / LMG 21445 / STM815) (Burkholderia phymatum).